The following is a 215-amino-acid chain: Cytochrome b6 (215 aa).

The chain crosses the membrane as a helical span at residues 32–52; the sequence is IFYCLGGITLTCFLVQVATGF. C35 is a binding site for heme c. Heme b-binding residues include H86 and H100. Helical transmembrane passes span 90–110, 116–136, and 186–206; these read ASMM…TGGF, LTWV…VTGY, and LHTF…FLMI. The heme b site is built by H187 and H202.

It belongs to the cytochrome b family. PetB subfamily. As to quaternary structure, the 4 large subunits of the cytochrome b6-f complex are cytochrome b6, subunit IV (17 kDa polypeptide, PetD), cytochrome f and the Rieske protein, while the 4 small subunits are PetG, PetL, PetM and PetN. The complex functions as a dimer. Heme b serves as cofactor. Heme c is required as a cofactor.

It localises to the plastid. The protein resides in the chloroplast thylakoid membrane. In terms of biological role, component of the cytochrome b6-f complex, which mediates electron transfer between photosystem II (PSII) and photosystem I (PSI), cyclic electron flow around PSI, and state transitions. The polypeptide is Cytochrome b6 (Physcomitrium patens (Spreading-leaved earth moss)).